The chain runs to 180 residues: Large ribosomal subunit protein uL5 (180 aa).

This sequence belongs to the universal ribosomal protein uL5 family. As to quaternary structure, part of the 50S ribosomal subunit; part of the 5S rRNA/L5/L18/L25 subcomplex. Contacts the 5S rRNA and the P site tRNA. Forms a bridge to the 30S subunit in the 70S ribosome.

In terms of biological role, this is one of the proteins that bind and probably mediate the attachment of the 5S RNA into the large ribosomal subunit, where it forms part of the central protuberance. In the 70S ribosome it contacts protein S13 of the 30S subunit (bridge B1b), connecting the 2 subunits; this bridge is implicated in subunit movement. Contacts the P site tRNA; the 5S rRNA and some of its associated proteins might help stabilize positioning of ribosome-bound tRNAs. This chain is Large ribosomal subunit protein uL5, found in Polynucleobacter asymbioticus (strain DSM 18221 / CIP 109841 / QLW-P1DMWA-1) (Polynucleobacter necessarius subsp. asymbioticus).